Reading from the N-terminus, the 198-residue chain is Sensory transduction protein RegX3 (198 aa).

In terms of domain architecture, Response regulatory spans 1-87; the sequence is MVTDGPAALA…ELIARIRAVL (87 aa). Aspartate 23 carries the post-translational modification 4-aspartylphosphate. A DNA-binding region (ompR/PhoB-type) is located at residues 99 to 198; that stretch reads DGVLESGPLR…VRGLGYKLES (100 aa).

Post-translationally, phosphorylated by SenX3.

In terms of biological role, member of the two-component regulatory system SenX3/RegX3. The sequence is that of Sensory transduction protein RegX3 (rgx3) from Mycobacterium leprae (strain TN).